Consider the following 238-residue polypeptide: Purine nucleoside phosphorylase DeoD-type (238 aa).

A purine D-ribonucleoside is bound at residue His4. Phosphate contacts are provided by residues Gly20, Arg24, Arg43, and 87–90; that span reads RVGS. Residues 179–181 and 203–204 contribute to the a purine D-ribonucleoside site; these read EME and SD. Asp204 functions as the Proton donor in the catalytic mechanism.

It belongs to the PNP/UDP phosphorylase family. As to quaternary structure, homohexamer; trimer of homodimers.

It catalyses the reaction a purine D-ribonucleoside + phosphate = a purine nucleobase + alpha-D-ribose 1-phosphate. The enzyme catalyses a purine 2'-deoxy-D-ribonucleoside + phosphate = a purine nucleobase + 2-deoxy-alpha-D-ribose 1-phosphate. Functionally, catalyzes the reversible phosphorolytic breakdown of the N-glycosidic bond in the beta-(deoxy)ribonucleoside molecules, with the formation of the corresponding free purine bases and pentose-1-phosphate. The sequence is that of Purine nucleoside phosphorylase DeoD-type from Histophilus somni (strain 2336) (Haemophilus somnus).